The primary structure comprises 487 residues: Glutamate--tRNA ligase (487 aa).

The 'HIGH' region signature appears at 13 to 23; it reads PSPTGLFHIGG. The 'KMSKS' region motif lies at 255–259; it reads KLSKR. Residue Lys-258 coordinates ATP.

This sequence belongs to the class-I aminoacyl-tRNA synthetase family. Glutamate--tRNA ligase type 1 subfamily. As to quaternary structure, monomer.

The protein resides in the cytoplasm. The enzyme catalyses tRNA(Glu) + L-glutamate + ATP = L-glutamyl-tRNA(Glu) + AMP + diphosphate. Catalyzes the attachment of glutamate to tRNA(Glu) in a two-step reaction: glutamate is first activated by ATP to form Glu-AMP and then transferred to the acceptor end of tRNA(Glu). The polypeptide is Glutamate--tRNA ligase (Malacoplasma penetrans (strain HF-2) (Mycoplasma penetrans)).